We begin with the raw amino-acid sequence, 1459 residues long: Mediator of RNA polymerase II transcription subunit 14 (1459 aa).

The disordered stretch occupies residues Met-1–Pro-37. The span at Pro-14–Ser-27 shows a compositional bias: gly residues. The short motif at Leu-75–Leu-79 is the LXXLL motif 1 element. Residues Lys-194–Tyr-572 are interaction with STAT2. The interaction with SREBF1 stretch occupies residues Leu-506–Trp-830. Phosphoserine is present on residues Ser-623 and Ser-992. The tract at residues Ala-979–Gln-1171 is disordered. 2 stretches are compositionally biased toward polar residues: residues Pro-1029–Ser-1059 and Asp-1097–Ser-1106. 5 positions are modified to phosphoserine: Ser-1117, Ser-1124, Ser-1133, Ser-1141, and Ser-1149. The segment covering Ala-1152–Thr-1161 has biased composition (polar residues). The short motif at Leu-1187–Leu-1191 is the LXXLL motif 2 element.

This sequence belongs to the Mediator complex subunit 14 family. As to quaternary structure, component of the Mediator complex, which is composed of MED1, MED4, MED6, MED7, MED8, MED9, MED10, MED11, MED12, MED13, MED13L, MED14, MED15, MED16, MED17, MED18, MED19, MED20, MED21, MED22, MED23, MED24, MED25, MED26, MED27, MED29, MED30, MED31, CCNC, CDK8 and CDC2L6/CDK11. The MED12, MED13, CCNC and CDK8 subunits form a distinct module termed the CDK8 module. Mediator containing the CDK8 module is less active than Mediator lacking this module in supporting transcriptional activation. Individual preparations of the Mediator complex lacking one or more distinct subunits have been variously termed ARC, CRSP, DRIP, PC2, SMCC and TRAP. Interacts with AR, ESR1, SREBF1 and STAT2. Interacts with GATA1.

The protein resides in the nucleus. In terms of biological role, component of the Mediator complex, a coactivator involved in the regulated transcription of nearly all RNA polymerase II-dependent genes. Mediator functions as a bridge to convey information from gene-specific regulatory proteins to the basal RNA polymerase II transcription machinery. Mediator is recruited to promoters by direct interactions with regulatory proteins and serves as a scaffold for the assembly of a functional preinitiation complex with RNA polymerase II and the general transcription factors. The protein is Mediator of RNA polymerase II transcription subunit 14 (Med14) of Mus musculus (Mouse).